The following is a 334-amino-acid chain: NADH-ubiquinone oxidoreductase chain 1 (334 aa).

9 helical membrane passes run 4-24, 82-102, 115-135, 161-181, 187-207, 222-242, 247-267, 268-288, and 311-331; these read FVFL…IIVI, FIYV…WGVI, IGIL…LMSG, IGLI…TEIV, GIWF…SALA, ELVS…FFLA, IILM…SPIV, FFKG…LLFI, and LPLS…LNGL.

It belongs to the complex I subunit 1 family.

It is found in the mitochondrion inner membrane. It catalyses the reaction a ubiquinone + NADH + 5 H(+)(in) = a ubiquinol + NAD(+) + 4 H(+)(out). In terms of biological role, core subunit of the mitochondrial membrane respiratory chain NADH dehydrogenase (Complex I) that is believed to belong to the minimal assembly required for catalysis. Complex I functions in the transfer of electrons from NADH to the respiratory chain. The immediate electron acceptor for the enzyme is believed to be ubiquinone. The chain is NADH-ubiquinone oxidoreductase chain 1 (ND1) from Metridium senile (Brown sea anemone).